The primary structure comprises 495 residues: AAA-ATPase At2g18193 (495 aa).

The helical transmembrane segment at 7 to 28 (FSFSPSSLFSAYASLTGFLMLF) threads the bilayer. 250–257 (GPPGTGKS) contacts ATP. The tract at residues 451–495 (EVSICKATDDDEKQNGSLGCVKKKKKGGKQKGKGKGKGKAKTYLI) is disordered. A compositionally biased stretch (basic residues) spans 471–495 (VKKKKKGGKQKGKGKGKGKAKTYLI).

This sequence belongs to the AAA ATPase family. BCS1 subfamily. Requires Mg(2+) as cofactor.

The protein resides in the membrane. The catalysed reaction is ATP + H2O = ADP + phosphate + H(+). This is AAA-ATPase At2g18193 from Arabidopsis thaliana (Mouse-ear cress).